We begin with the raw amino-acid sequence, 168 residues long: G/U mismatch-specific DNA glycosylase (168 aa).

It belongs to the uracil-DNA glycosylase (UDG) superfamily. TDG/mug family. In terms of assembly, binds DNA as a monomer.

It is found in the cytoplasm. The enzyme catalyses Specifically hydrolyzes mismatched double-stranded DNA and polynucleotides, releasing free uracil.. Its function is as follows. Excises ethenocytosine and uracil, which can arise by alkylation or deamination of cytosine, respectively, from the corresponding mispairs with guanine in ds-DNA. It is capable of hydrolyzing the carbon-nitrogen bond between the sugar-phosphate backbone of the DNA and the mispaired base. The complementary strand guanine functions in substrate recognition. Required for DNA damage lesion repair in stationary-phase cells. This chain is G/U mismatch-specific DNA glycosylase, found in Salmonella choleraesuis (strain SC-B67).